A 149-amino-acid polypeptide reads, in one-letter code: Limonene-1,2-epoxide hydrolase (149 aa).

Residue Asp101 is the Proton donor of the active site. The active-site Proton acceptor is Asp132.

It belongs to the limonene-1,2-epoxide hydrolase family. In terms of assembly, monomer.

It catalyses the reaction limonene 1,2-epoxide + H2O = limonene-1,2-diol. Its pathway is terpene metabolism; (4R)-limonene degradation; (1S,4R)-1-hydroxylimonen-2-one from (4R)-limonene: step 2/3. Its function is as follows. Catalyzes the conversion of limonene-1,2-epoxide to limonene-1,2-diol. Can use both the (-) and (+) isomers of limonene-1,2-epoxide as substrates and also has some activity with 1-methylcyclohexene oxide, cyclohexene oxide and indene oxide as substrates. In Rhodococcus erythropolis (Arthrobacter picolinophilus), this protein is Limonene-1,2-epoxide hydrolase (limA).